The sequence spans 389 residues: Succinate--CoA ligase [ADP-forming] subunit beta (389 aa).

In terms of domain architecture, ATP-grasp spans 9-236; that stretch reads RDLFEAHGVP…ERTEDPLEAK (228 aa). ATP is bound by residues lysine 45, 52–54, alanine 94, and glutamate 99; that span reads GRG. 2 residues coordinate Mg(2+): asparagine 191 and aspartate 205. Residues asparagine 256 and 318–320 each bind substrate; that span reads GIT.

This sequence belongs to the succinate/malate CoA ligase beta subunit family. Heterotetramer of two alpha and two beta subunits. Requires Mg(2+) as cofactor.

The enzyme catalyses succinate + ATP + CoA = succinyl-CoA + ADP + phosphate. It catalyses the reaction GTP + succinate + CoA = succinyl-CoA + GDP + phosphate. It participates in carbohydrate metabolism; tricarboxylic acid cycle; succinate from succinyl-CoA (ligase route): step 1/1. In terms of biological role, succinyl-CoA synthetase functions in the citric acid cycle (TCA), coupling the hydrolysis of succinyl-CoA to the synthesis of either ATP or GTP and thus represents the only step of substrate-level phosphorylation in the TCA. The beta subunit provides nucleotide specificity of the enzyme and binds the substrate succinate, while the binding sites for coenzyme A and phosphate are found in the alpha subunit. This Micrococcus luteus (strain ATCC 4698 / DSM 20030 / JCM 1464 / CCM 169 / CCUG 5858 / IAM 1056 / NBRC 3333 / NCIMB 9278 / NCTC 2665 / VKM Ac-2230) (Micrococcus lysodeikticus) protein is Succinate--CoA ligase [ADP-forming] subunit beta.